Reading from the N-terminus, the 910-residue chain is Leucine--tRNA ligase (910 aa).

Residues P50 to H60 carry the 'HIGH' region motif. Residues K611 to S615 carry the 'KMSKS' region motif. Residue K614 coordinates ATP.

Belongs to the class-I aminoacyl-tRNA synthetase family.

It localises to the cytoplasm. It carries out the reaction tRNA(Leu) + L-leucine + ATP = L-leucyl-tRNA(Leu) + AMP + diphosphate. This is Leucine--tRNA ligase from Thermoplasma acidophilum (strain ATCC 25905 / DSM 1728 / JCM 9062 / NBRC 15155 / AMRC-C165).